Reading from the N-terminus, the 340-residue chain is Adenosine deaminase (340 aa).

The Zn(2+) site is built by His-15 and His-17. Positions 17, 19, and 172 each coordinate substrate. Zn(2+) is bound at residue His-199. Glu-202 (proton donor) is an active-site residue. Asp-279 lines the Zn(2+) pocket.

Belongs to the metallo-dependent hydrolases superfamily. Adenosine and AMP deaminases family. Adenosine deaminase subfamily. Requires Zn(2+) as cofactor.

It carries out the reaction adenosine + H2O + H(+) = inosine + NH4(+). The catalysed reaction is 2'-deoxyadenosine + H2O + H(+) = 2'-deoxyinosine + NH4(+). Its function is as follows. Catalyzes the hydrolytic deamination of adenosine and 2-deoxyadenosine. In Streptococcus agalactiae serotype III (strain NEM316), this protein is Adenosine deaminase.